The chain runs to 528 residues: Serine/threonine-protein kinase akt-2 (528 aa).

A PH domain is found at 12–115 (DIVIESWLHK…WIEAIQAVSS (104 aa)). A disordered region spans residues 121-153 (ENAGNTSMQEEDTNGNPSGESDVNMDATSTRSD). Over residues 123 to 153 (AGNTSMQEEDTNGNPSGESDVNMDATSTRSD) the composition is skewed to polar residues. A Protein kinase domain is found at 180–437 (FDFLKVLGQG…AREVSRAEFF (258 aa)). Residues 186–194 (LGQGTFGKV) and Lys-209 each bind ATP. Catalysis depends on Asp-303, which acts as the Proton acceptor. Residues 438 to 515 (KDVDWEATLR…YYVSGSLERS (78 aa)) enclose the AGC-kinase C-terminal domain.

This sequence belongs to the protein kinase superfamily. AGC Ser/Thr protein kinase family. RAC subfamily. As to quaternary structure, interacts with pdk-1, sgk-1, akt-1 and daf-16. Part of a complex containing sgk-1, akt-1 and akt-2. Mg(2+) serves as cofactor. In terms of tissue distribution, expressed in neurons, muscle cells of the pharynx, rectal gland cells, and spermatheca.

It carries out the reaction L-seryl-[protein] + ATP = O-phospho-L-seryl-[protein] + ADP + H(+). The enzyme catalyses L-threonyl-[protein] + ATP = O-phospho-L-threonyl-[protein] + ADP + H(+). With respect to regulation, phosphorylated and activated by pdk-1. Functionally, acts downstream of PI3 kinase age-1 and kinase pdk-1 in the daf-2/insulin receptor-like transduction pathway. Essential role in regulating developmental arrest at the dauer stage. Phosphorylates Forkhead-related daf-16 and the longevity-promoting skn-1 transcription factors, which inhibits their entry into the nucleus and antagonizes their functions. Role in immune function and pathogen resistance. Downstream of age-1 and together with akt-1 and sgk-1, promotes cell survival during embryonic development. Plays a role in maintaining the gonadal basement membrane through antagonizing akt-1 activity. The polypeptide is Serine/threonine-protein kinase akt-2 (Caenorhabditis elegans).